Here is a 176-residue protein sequence, read N- to C-terminus: Disulfide bond formation protein B (176 aa).

At 1–14 the chain is on the cytoplasmic side; it reads MMRSLNRCSKHRAA. The helical transmembrane segment at 15–31 threads the bilayer; it reads WLLLALTTFSLELVALY. Residues 32–49 lie on the Periplasmic side of the membrane; it reads FQHVMLLKPCVLCVYQRC. Cysteines 41 and 44 form a disulfide. A helical membrane pass occupies residues 50-65; that stretch reads ALYGVVAAGLVGAIAP. At 66 to 71 the chain is on the cytoplasmic side; the sequence is ATPLRF. A helical transmembrane segment spans residues 72-89; sequence SGLAIWLYSAWEGLQLAM. Residues 90–144 are Periplasmic-facing; that stretch reads KHTDIQLHPSPFVTCDFFVSFPAWLPLDKWLPSVFSASGDCAVRQWHFLSLEMPQ. A disulfide bridge connects residues Cys104 and Cys130. Residues 145 to 163 form a helical membrane-spanning segment; it reads WMIVIFGAYLAVAVLILLA. Residues 164-176 are Cytoplasmic-facing; the sequence is QFFPPRKRDLFSR.

The protein belongs to the DsbB family.

It localises to the cell inner membrane. Functionally, required for disulfide bond formation in some periplasmic proteins. Acts by oxidizing the DsbA protein. The chain is Disulfide bond formation protein B from Sodalis glossinidius (strain morsitans).